Reading from the N-terminus, the 346-residue chain is tRNA N6-adenosine threonylcarbamoyltransferase (346 aa).

Fe cation contacts are provided by H111 and H115. Substrate contacts are provided by residues 134-138 (LVSGG), D167, G180, D184, and N279. Position 307 (D307) interacts with Fe cation.

It belongs to the KAE1 / TsaD family. Requires Fe(2+) as cofactor.

The protein resides in the cytoplasm. It catalyses the reaction L-threonylcarbamoyladenylate + adenosine(37) in tRNA = N(6)-L-threonylcarbamoyladenosine(37) in tRNA + AMP + H(+). In terms of biological role, required for the formation of a threonylcarbamoyl group on adenosine at position 37 (t(6)A37) in tRNAs that read codons beginning with adenine. Is involved in the transfer of the threonylcarbamoyl moiety of threonylcarbamoyl-AMP (TC-AMP) to the N6 group of A37, together with TsaE and TsaB. TsaD likely plays a direct catalytic role in this reaction. The sequence is that of tRNA N6-adenosine threonylcarbamoyltransferase from Nostoc sp. (strain PCC 7120 / SAG 25.82 / UTEX 2576).